A 131-amino-acid polypeptide reads, in one-letter code: MTVTDPIADMLVRIKNASMRRHPTVDVPYSKMKEKILEILLREGYIARYEVIGEIPQKYIRVYLKYKGKTPVIQDVKRVSKPGRRYYVNKEEIPRVLGGLGIAILSTSKGIMTDKEARLLGVGGELICMVW.

It belongs to the universal ribosomal protein uS8 family. As to quaternary structure, part of the 30S ribosomal subunit. Contacts proteins S5 and S12.

One of the primary rRNA binding proteins, it binds directly to 16S rRNA central domain where it helps coordinate assembly of the platform of the 30S subunit. This is Small ribosomal subunit protein uS8 from Dictyoglomus thermophilum (strain ATCC 35947 / DSM 3960 / H-6-12).